The chain runs to 1172 residues: Laminin subunit beta-3 (1172 aa).

The N-terminal stretch at 1–17 (MRPFFLLCFALPGLLHA) is a signal peptide. Residues 22–249 (SRGACYPPVG…AVSQLRLQGS (228 aa)) enclose the Laminin N-terminal domain. Asparagine 220 carries an N-linked (GlcNAc...) asparagine glycan. 24 cysteine pairs are disulfide-bonded: cysteine 250/cysteine 259, cysteine 252/cysteine 279, cysteine 281/cysteine 290, cysteine 293/cysteine 313, cysteine 316/cysteine 325, cysteine 318/cysteine 343, cysteine 346/cysteine 355, cysteine 358/cysteine 376, cysteine 379/cysteine 392, cysteine 381/cysteine 399, cysteine 401/cysteine 410, cysteine 413/cysteine 428, cysteine 431/cysteine 444, cysteine 433/cysteine 451, cysteine 453/cysteine 462, cysteine 465/cysteine 478, cysteine 481/cysteine 493, cysteine 483/cysteine 500, cysteine 502/cysteine 511, cysteine 519/cysteine 531, cysteine 534/cysteine 546, cysteine 536/cysteine 553, cysteine 555/cysteine 564, and cysteine 567/cysteine 578. Laminin EGF-like domains are found at residues 250 to 315 (CFCH…ECQR), 316 to 378 (CDCN…TCIS), 379 to 430 (CECD…GCHR), 431 to 480 (CDCN…GCEP), 481 to 533 (CACD…GCRA), and 534 to 580 (CDCD…VCVA). Residues 579–785 (VACHPCFQTY…SLPDLTPTFN (207 aa)) are domain II. Residue asparagine 604 is glycosylated (N-linked (GlcNAc...) asparagine). Residues 723 to 757 (EQSAQAAQQVSDSSRLLDQLRDSRREAERLVRQAG) are a coiled coil. The domain alpha stretch occupies residues 786–816 (KLCGNSRQMACTPISCPGELCPQDNGTACGS). An N-linked (GlcNAc...) asparagine glycan is attached at asparagine 810. The interval 817-1170 (RCRGVLPRAG…INGRVLYYAT (354 aa)) is domain I. Coiled-coil stretches lie at residues 831-884 (MAGQ…MEED) and 948-1133 (VLSQ…ELEL).

In terms of assembly, laminin is a complex glycoprotein, consisting of three different polypeptide chains (alpha, beta, gamma), which are bound to each other by disulfide bonds into a cross-shaped molecule comprising one long and three short arms with globules at each end. Beta-3 is a subunit of laminin-5 (laminin-332 or epiligrin/kalinin/nicein). Interacts with ECM1. As to expression, found in the basement membranes (major component).

The protein localises to the secreted. Its subcellular location is the extracellular space. It is found in the extracellular matrix. The protein resides in the basement membrane. Functionally, binding to cells via a high affinity receptor, laminin is thought to mediate the attachment, migration and organization of cells into tissues during embryonic development by interacting with other extracellular matrix components. The sequence is that of Laminin subunit beta-3 (LAMB3) from Homo sapiens (Human).